An 862-amino-acid chain; its full sequence is Leucine--tRNA ligase (862 aa).

The short motif at 51–61 is the 'HIGH' region element; that stretch reads PYPSGSLHMGH. The short motif at 624–628 is the 'KMSKS' region element; it reads KMSKS. An ATP-binding site is contributed by K627.

The protein belongs to the class-I aminoacyl-tRNA synthetase family.

It is found in the cytoplasm. The catalysed reaction is tRNA(Leu) + L-leucine + ATP = L-leucyl-tRNA(Leu) + AMP + diphosphate. In Prochlorococcus marinus (strain NATL2A), this protein is Leucine--tRNA ligase.